A 199-amino-acid chain; its full sequence is 7-methyl-GTP pyrophosphatase (199 aa).

Catalysis depends on Asp74, which acts as the Proton acceptor.

This sequence belongs to the Maf family. YceF subfamily. It depends on a divalent metal cation as a cofactor.

The protein localises to the cytoplasm. It carries out the reaction N(7)-methyl-GTP + H2O = N(7)-methyl-GMP + diphosphate + H(+). Nucleoside triphosphate pyrophosphatase that hydrolyzes 7-methyl-GTP (m(7)GTP). May have a dual role in cell division arrest and in preventing the incorporation of modified nucleotides into cellular nucleic acids. This Cupriavidus pinatubonensis (strain JMP 134 / LMG 1197) (Cupriavidus necator (strain JMP 134)) protein is 7-methyl-GTP pyrophosphatase.